We begin with the raw amino-acid sequence, 1343 residues long: MGYSYSEKKRIRKDFGKRPQVLNVPYLLTIQLDSFDKFIQKDPEGQQGLEAAFRSVFPIVSNNGYTELQYVDYRLEEPEFDVRECQIRGSTYAAGLRVKLRLVSYDKESSSRAVKDIKENEVYMGEIPLMTDNGTFVINGTERVIVSQLHRSPGVFFDSDKGKTHSSGKVLYNARIIPYRGSWLDFEFDPKDNLFARIDRRRKLPATIILRALGYTTEEILNLFFDKITFEIAGDKLLMTLVPERLRGETASFDIEANGKVYVERGRRITARHIKALEKDNISQVVVPSEYILGKVASKDYVDLESGEIICPANGEISLETLAKLAQAGYTTIETLFTNDLDYGPYISETLRVDPTYDKISALYEIYRMMRPGEPPTPESSEALFNNLFFSAERYDLSTVGRMKFNRSLAFPEGEGAGILSNEDIIAVMRKLIDIRNGRGEVDDIDHLGNRRIRSVGEMAENQFRIGLVRVERAVKERLSLGDLDAITPQDLINPKPISAAVKEFFGSSQLSQFMDQNNPLSEVTHKRRISALGPGGLTRERAGFEVRDVHNTHYGRLCPIETPEGPNIGLINSLSAFARTNDYGFLETPYRKVVDGQVTEEIEYLSVIDEANYIIAQANSNLDENNRFTDAFVTARGERGESGLYKPEDIHYMDVSTQQVVSVAAALIPFLEHDDANRALMGANMQRQAVPTLRADKPLVGTGMEKPIALDSGVAVVAKRGGTVQYVDASRIVIKVNEDETIAGEAGIDIYNLIKYTRSNQNTCINQIPCVNLGDPINRGEVLADGPSTDLGELALGQNIRVAFMPWNGYNFEDSMLVSERVVQQDRFTTIHIQELSCVARDTKLGAEEITADIPNVGESALSKLDESGIVYVGAEVKGGDILVGKVTPKGETQLTPEEKLLRAIFGEKASDVKDSSLRVPNGTSGTVIDVQVFTRDGVEKDKRALEIEEMQLREAKKDLTEELEILEAGLFARVRNLLISSGADAAQLDKVDRTKWLEQTIADEEKQNQLEQLAEQYEELRKEFEHKLEVKRKKIIKGDDLAPGVLKVVKVYLAVKRQIQPGDKMAGRHGNKGVISKINPVEDMPYDENGQPVEIVLNPLGVPSRMNIGQILETHLGLAAKGIGDQINAMLKQKQEVEKLRSYIQKAYDLLGNGSQKVDLSTFTDEEVLRLAGNLRKGLPVATPVFDGADEAEIKELLKLGGLPTSGQITLYDGRTGEKFERPVTVGYMYMLKLNHLVDDKMHARSTGSYSLVTQQPLGGKAQFGGQRFGEMEVWALEAYGAAYTLQEMLTVKSDDVNGRTKMYKNIVSGNQHMEPGTPESFNVIMKEIRSLGLNIELDEE.

It belongs to the RNA polymerase beta chain family. The RNAP catalytic core consists of 2 alpha, 1 beta, 1 beta' and 1 omega subunit. When a sigma factor is associated with the core the holoenzyme is formed, which can initiate transcription.

The enzyme catalyses RNA(n) + a ribonucleoside 5'-triphosphate = RNA(n+1) + diphosphate. In terms of biological role, DNA-dependent RNA polymerase catalyzes the transcription of DNA into RNA using the four ribonucleoside triphosphates as substrates. In Haemophilus influenzae (strain PittGG), this protein is DNA-directed RNA polymerase subunit beta.